Here is a 482-residue protein sequence, read N- to C-terminus: MTTAIQEQQNSAAPTAAGRVVRVIGPVVDVEFPRGQQPALFNALHVEVDLEAVAKTITLEVAQHLGDNLVRTVSMAPTDGLVRGAEVKDTGKPISVPVGDVVKGHVFNALGDCLDEPGLGRDGEQWGIHREPPAFDELEGKTEILETGVKVIDLLTPYVKGGKIGLFGGAGVGKTVLIQEMITRIAREFSGTSVFAGVGERTREGTDLFLEMEEMGVLQDTALVFGQMDEPPGVRMRVALSGLTMAEYFRDVQGQDVLLFIDNIFRFTQAGSEVSTLLGRMPSAVGYQPTLADEMGVLQERITSTKGKSITSLQAVYVPADDYTDPAPATTFAHLDATTELDRAIASKGIYPAVNPLTSTSRILEPGIVGEKHYEVAQRVINILQKNKELQDIIAILGMDELSEEDKITVQRARRIERFLGQNFFVAEKFTGIPGSFVPLEETIDAFERICDGEFDAYPEQAFNGLGGLDDVEAAYKKLTDK.

Residue 168–175 coordinates ATP; the sequence is GGAGVGKT.

It belongs to the ATPase alpha/beta chains family. As to quaternary structure, F-type ATPases have 2 components, CF(1) - the catalytic core - and CF(0) - the membrane proton channel. CF(1) has five subunits: alpha(3), beta(3), gamma(1), delta(1), epsilon(1). CF(0) has three main subunits: a(1), b(2) and c(9-12). The alpha and beta chains form an alternating ring which encloses part of the gamma chain. CF(1) is attached to CF(0) by a central stalk formed by the gamma and epsilon chains, while a peripheral stalk is formed by the delta and b chains.

Its subcellular location is the cell membrane. It catalyses the reaction ATP + H2O + 4 H(+)(in) = ADP + phosphate + 5 H(+)(out). Functionally, produces ATP from ADP in the presence of a proton gradient across the membrane. The catalytic sites are hosted primarily by the beta subunits. The sequence is that of ATP synthase subunit beta from Corynebacterium urealyticum (strain ATCC 43042 / DSM 7109).